Here is a 349-residue protein sequence, read N- to C-terminus: Protein RecA (349 aa).

Residue 64 to 71 (GPESSGKT) coordinates ATP. Positions 328–349 (NGEIEVEAPSEEEFEDLPLDLK) are disordered. Positions 331–349 (IEVEAPSEEEFEDLPLDLK) are enriched in acidic residues.

It belongs to the RecA family.

It is found in the cytoplasm. Functionally, can catalyze the hydrolysis of ATP in the presence of single-stranded DNA, the ATP-dependent uptake of single-stranded DNA by duplex DNA, and the ATP-dependent hybridization of homologous single-stranded DNAs. It interacts with LexA causing its activation and leading to its autocatalytic cleavage. In Halalkalibacterium halodurans (strain ATCC BAA-125 / DSM 18197 / FERM 7344 / JCM 9153 / C-125) (Bacillus halodurans), this protein is Protein RecA.